A 1392-amino-acid polypeptide reads, in one-letter code: DNA-directed RNA polymerase subunit beta'' (1392 aa).

Positions 224, 295, 302, and 305 each coordinate Zn(2+).

This sequence belongs to the RNA polymerase beta' chain family. RpoC2 subfamily. In plastids the minimal PEP RNA polymerase catalytic core is composed of four subunits: alpha, beta, beta', and beta''. When a (nuclear-encoded) sigma factor is associated with the core the holoenzyme is formed, which can initiate transcription. It depends on Zn(2+) as a cofactor.

It localises to the plastid. Its subcellular location is the chloroplast. It carries out the reaction RNA(n) + a ribonucleoside 5'-triphosphate = RNA(n+1) + diphosphate. DNA-dependent RNA polymerase catalyzes the transcription of DNA into RNA using the four ribonucleoside triphosphates as substrates. The protein is DNA-directed RNA polymerase subunit beta'' of Eucalyptus globulus subsp. globulus (Tasmanian blue gum).